Consider the following 275-residue polypeptide: Dermonecrotic toxin LspiSicTox-betaIE4i (275 aa).

Glutamate 24 and aspartate 26 together coordinate Mg(2+). Histidine 40 acts as the Nucleophile in catalysis. 2 cysteine pairs are disulfide-bonded: cysteine 44–cysteine 50 and cysteine 46–cysteine 188. Aspartate 84 lines the Mg(2+) pocket.

Belongs to the arthropod phospholipase D family. Class II subfamily. Mg(2+) is required as a cofactor. As to expression, expressed by the venom gland.

It localises to the secreted. The catalysed reaction is an N-(acyl)-sphingosylphosphocholine = an N-(acyl)-sphingosyl-1,3-cyclic phosphate + choline. The enzyme catalyses an N-(acyl)-sphingosylphosphoethanolamine = an N-(acyl)-sphingosyl-1,3-cyclic phosphate + ethanolamine. It carries out the reaction a 1-acyl-sn-glycero-3-phosphocholine = a 1-acyl-sn-glycero-2,3-cyclic phosphate + choline. It catalyses the reaction a 1-acyl-sn-glycero-3-phosphoethanolamine = a 1-acyl-sn-glycero-2,3-cyclic phosphate + ethanolamine. Functionally, dermonecrotic toxins cleave the phosphodiester linkage between the phosphate and headgroup of certain phospholipids (sphingolipid and lysolipid substrates), forming an alcohol (often choline) and a cyclic phosphate. This toxin acts on sphingomyelin (SM). It may also act on ceramide phosphoethanolamine (CPE), lysophosphatidylcholine (LPC) and lysophosphatidylethanolamine (LPE), but not on lysophosphatidylserine (LPS), and lysophosphatidylglycerol (LPG). It acts by transphosphatidylation, releasing exclusively cyclic phosphate products as second products. Induces dermonecrosis, hemolysis, increased vascular permeability, edema, inflammatory response, and platelet aggregation. This chain is Dermonecrotic toxin LspiSicTox-betaIE4i, found in Loxosceles spinulosa (Recluse spider).